The following is a 341-amino-acid chain: DNA-directed RNA polymerase subunit alpha (341 aa).

The tract at residues 1–226 (MLIAQRPTIT…ELFGLVRELN (226 aa)) is alpha N-terminal domain (alpha-NTD). Positions 241 to 341 (AALAADLALP…DQRYIETEQL (101 aa)) are alpha C-terminal domain (alpha-CTD).

This sequence belongs to the RNA polymerase alpha chain family. In terms of assembly, homodimer. The RNAP catalytic core consists of 2 alpha, 1 beta, 1 beta' and 1 omega subunit. When a sigma factor is associated with the core the holoenzyme is formed, which can initiate transcription.

It catalyses the reaction RNA(n) + a ribonucleoside 5'-triphosphate = RNA(n+1) + diphosphate. Its function is as follows. DNA-dependent RNA polymerase catalyzes the transcription of DNA into RNA using the four ribonucleoside triphosphates as substrates. This is DNA-directed RNA polymerase subunit alpha from Acidothermus cellulolyticus (strain ATCC 43068 / DSM 8971 / 11B).